The following is a 337-amino-acid chain: Arylacetonitrilase (337 aa).

The CN hydrolase domain occupies valine 7–leucine 278. Glutamate 47 acts as the Proton acceptor in catalysis. Lysine 127 is an active-site residue. Residue cysteine 162 is the Nucleophile of the active site. Positions glutamine 311–alanine 337 are disordered.

It belongs to the carbon-nitrogen hydrolase superfamily. Nitrilase family.

The catalysed reaction is a nitrile + 2 H2O = a carboxylate + NH4(+). It carries out the reaction 4-chlorophenylacetonitrile + 2 H2O = 4-chlorophenylacetate + NH4(+). Nitrilase that hydrolyzes preferentially phenylacetonitrile, but also (R,S)-mandelonitrile, and 2-phenylpropionitrile. This is Arylacetonitrilase from Aspergillus niger (strain ATCC MYA-4892 / CBS 513.88 / FGSC A1513).